Reading from the N-terminus, the 422-residue chain is Gamma-glutamyl phosphate reductase (422 aa).

The protein belongs to the gamma-glutamyl phosphate reductase family.

The protein localises to the cytoplasm. It carries out the reaction L-glutamate 5-semialdehyde + phosphate + NADP(+) = L-glutamyl 5-phosphate + NADPH + H(+). It participates in amino-acid biosynthesis; L-proline biosynthesis; L-glutamate 5-semialdehyde from L-glutamate: step 2/2. Its function is as follows. Catalyzes the NADPH-dependent reduction of L-glutamate 5-phosphate into L-glutamate 5-semialdehyde and phosphate. The product spontaneously undergoes cyclization to form 1-pyrroline-5-carboxylate. This is Gamma-glutamyl phosphate reductase from Nitrosomonas europaea (strain ATCC 19718 / CIP 103999 / KCTC 2705 / NBRC 14298).